Consider the following 229-residue polypeptide: Chloride conductance regulatory protein ICln (229 aa).

It belongs to the pICln (TC 1.A.47) family. Homooligomer.

Its subcellular location is the cytoplasm. The protein localises to the nucleus. In terms of biological role, may participate in cellular volume control by activation of a swelling-induced chloride conductance pathway. The protein is Chloride conductance regulatory protein ICln of Arabidopsis thaliana (Mouse-ear cress).